A 95-amino-acid chain; its full sequence is Protein TusB (95 aa).

The protein belongs to the DsrH/TusB family. In terms of assembly, heterohexamer, formed by a dimer of trimers. The hexameric TusBCD complex contains 2 copies each of TusB, TusC and TusD. The TusBCD complex interacts with TusE.

Its subcellular location is the cytoplasm. Functionally, part of a sulfur-relay system required for 2-thiolation of 5-methylaminomethyl-2-thiouridine (mnm(5)s(2)U) at tRNA wobble positions. The protein is Protein TusB of Escherichia coli (strain ATCC 8739 / DSM 1576 / NBRC 3972 / NCIMB 8545 / WDCM 00012 / Crooks).